Here is a 1457-residue protein sequence, read N- to C-terminus: ABC transporter G family member 36 (1457 aa).

The tract at residues 14-43 is disordered; that stretch reads RLGGSMRGDSGSMWRRGDDVFSRSSREEDD. The segment covering 28–39 has biased composition (basic and acidic residues); that stretch reads RRGDDVFSRSSR. Residues 164 to 437 form the ABC transporter 1 domain; it reads GNALGILPNR…FESMGFKCPD (274 aa). 197–204 serves as a coordination point for ATP; that stretch reads GPPGSGKT. Positions 515 to 728 constitute an ABC transmembrane type-2 1 domain; that stretch reads ELLKANIDRE…AQNAISVNEL (214 aa). Helical transmembrane passes span 533-553, 565-585, 621-641, 653-673, 677-697, 706-726, and 765-785; these read FVYMFRTFQLMVVSLIAMTLF, SGGIYMGALFFGVLMIMFNGF, IPITFIEVGGYVFLTYYVIGF, LLMLAINQMAGSLFRFIGGAA, IVANVFASFMLLIFMVLGGFI, WWIWGYWISPMMYAQNAISVN, and IGFGAMIGFTILFNALFTLAL. The tract at residues 821-841 is disordered; sequence SSGSTRRPMGNGTENDSTIVD. An ABC transporter 2 domain is found at 860–1112; that stretch reads LSFDNVRYSV…ELIKYFESIP (253 aa). 905–912 lines the ATP pocket; that stretch reads GVSGAGKT. One can recognise an ABC transmembrane type-2 2 domain in the interval 1185–1399; it reads TQCMACLWKQ…TLYGLVVSQF (215 aa). 7 consecutive transmembrane segments (helical) span residues 1209 to 1229, 1244 to 1264, 1292 to 1312, 1319 to 1339, 1349 to 1369, 1380 to 1400, and 1429 to 1449; these read FFFTTVIALLFGTIFWDLGGK, YAAVLFIGVMNCTSVQPVVAV, IPYTLVQATVYGIIVYAMIGF, FFWYLFFMVFTLLYFTFYGMM, IASIVSSAFYAIWNLFSGFVI, WYCWACPVAWTLYGLVVSQFG, and WVATVVAAFAFLFASLFGFAI.

It belongs to the ABC transporter superfamily. ABCG family. PDR (TC 3.A.1.205) subfamily.

Its subcellular location is the membrane. In terms of biological role, may be a general defense protein. This Oryza sativa subsp. japonica (Rice) protein is ABC transporter G family member 36.